Reading from the N-terminus, the 82-residue chain is Delta-actitoxin-Aeq2b 2 (82 aa).

Residues 1–19 form the signal peptide; that stretch reads MNRLMILVFAAVFLALASA. Positions 20–26 are excised as a propeptide; sequence DEDVDIA. 3 disulfides stabilise this stretch: cysteine 32-cysteine 79, cysteine 34-cysteine 69, and cysteine 62-cysteine 80.

The protein belongs to the sea anemone sodium channel inhibitory toxin family. Type I subfamily.

It localises to the secreted. It is found in the nematocyst. Functionally, binds specifically to voltage-gated sodium channels (Nav), thereby delaying their inactivation during signal transduction. Causes death to crabs. The chain is Delta-actitoxin-Aeq2b 2 from Actinia equina (Beadlet anemone).